We begin with the raw amino-acid sequence, 253 residues long: Indole-3-glycerol phosphate synthase (253 aa).

The protein belongs to the TrpC family.

The catalysed reaction is 1-(2-carboxyphenylamino)-1-deoxy-D-ribulose 5-phosphate + H(+) = (1S,2R)-1-C-(indol-3-yl)glycerol 3-phosphate + CO2 + H2O. It functions in the pathway amino-acid biosynthesis; L-tryptophan biosynthesis; L-tryptophan from chorismate: step 4/5. The protein is Indole-3-glycerol phosphate synthase of Bacillus thuringiensis subsp. konkukian (strain 97-27).